Reading from the N-terminus, the 486-residue chain is Vesicular GABA transporter (486 aa).

At Met1–Gln93 the chain is on the cytoplasmic side. The segment covering Leu29–Ser46 has biased composition (polar residues). Residues Leu29–Ala85 form a disordered region. The span at Pro66–Ala85 shows a compositional bias: basic and acidic residues. A helical transmembrane segment spans residues Ala94–Val114. Residues Lys115–Trp119 lie on the Lumenal, vesicle side of the membrane. The chain crosses the membrane as a helical span at residues Trp120–Ile140. The Cytoplasmic segment spans residues Glu141–Lys167. Residues Trp168–Ala188 traverse the membrane as a helical segment. Topologically, residues Ala189–Gly203 are lumenal, vesicle. Residues Trp204–Val224 form a helical membrane-spanning segment. Residues Ser225–Ser228 are Cytoplasmic-facing. A helical membrane pass occupies residues Phe229–Phe249. At Val250 to Asn263 the chain is on the lumenal, vesicle side. Residues Ile264–Leu284 form a helical membrane-spanning segment. The Cytoplasmic portion of the chain corresponds to Pro285–His305. Residues Ile306–Leu326 form a helical membrane-spanning segment. Over Thr327 to Lys341 the chain is Lumenal, vesicle. Asn337 carries N-linked (GlcNAc...) asparagine glycosylation. The chain crosses the membrane as a helical span at residues Ile342–Ala362. At Ala363 to Arg398 the chain is on the cytoplasmic side. Residues Ile399–Met419 form a helical membrane-spanning segment. The Lumenal, vesicle segment spans residues Gly420 to Leu421. The helical transmembrane segment at Val422–Ile442 threads the bilayer. The Cytoplasmic portion of the chain corresponds to Lys443–Gly457. The helical transmembrane segment at Ile458 to Leu478 threads the bilayer. Residues Arg479–Ser486 are Lumenal, vesicle-facing.

This sequence belongs to the amino acid/polyamine transporter 2 family.

Its subcellular location is the cytoplasmic vesicle membrane. Its function is as follows. Involved in the uptake of GABA into the synaptic vesicles. The protein is Vesicular GABA transporter (unc-47) of Caenorhabditis elegans.